A 455-amino-acid polypeptide reads, in one-letter code: Ribosomal protein uS12 methylthiotransferase RimO (455 aa).

Positions 1 to 114 (MKYHIVTLGC…INALVGQLER (114 aa)) constitute an MTTase N-terminal domain. [4Fe-4S] cluster is bound by residues C10, C46, C78, C166, C170, and C173. The region spanning 152–383 (THQTPSAYLK…MRLQQTISYT (232 aa)) is the Radical SAM core domain. Residues 386 to 455 (QRWVGRTIKV…AYDLWGEALS (70 aa)) enclose the TRAM domain.

This sequence belongs to the methylthiotransferase family. RimO subfamily. The cofactor is [4Fe-4S] cluster.

It localises to the cytoplasm. It carries out the reaction L-aspartate(89)-[ribosomal protein uS12]-hydrogen + (sulfur carrier)-SH + AH2 + 2 S-adenosyl-L-methionine = 3-methylsulfanyl-L-aspartate(89)-[ribosomal protein uS12]-hydrogen + (sulfur carrier)-H + 5'-deoxyadenosine + L-methionine + A + S-adenosyl-L-homocysteine + 2 H(+). In terms of biological role, catalyzes the methylthiolation of an aspartic acid residue of ribosomal protein uS12. The chain is Ribosomal protein uS12 methylthiotransferase RimO from Chloroflexus aurantiacus (strain ATCC 29366 / DSM 635 / J-10-fl).